The primary structure comprises 370 residues: Uroporphyrinogen decarboxylase (370 aa).

Substrate contacts are provided by residues 29-33, Asp79, Tyr155, Ser210, and His342; that span reads RQAGR.

The protein belongs to the uroporphyrinogen decarboxylase family. Homodimer.

It localises to the cytoplasm. It carries out the reaction uroporphyrinogen III + 4 H(+) = coproporphyrinogen III + 4 CO2. The protein operates within porphyrin-containing compound metabolism; protoporphyrin-IX biosynthesis; coproporphyrinogen-III from 5-aminolevulinate: step 4/4. In terms of biological role, catalyzes the decarboxylation of four acetate groups of uroporphyrinogen-III to yield coproporphyrinogen-III. This chain is Uroporphyrinogen decarboxylase, found in Acidovorax ebreus (strain TPSY) (Diaphorobacter sp. (strain TPSY)).